The following is a 239-amino-acid chain: Ribonuclease 3 (239 aa).

Residues 11 to 133 (HTAIQKKLGY…MFAAVSFDAD (123 aa)) enclose the RNase III domain. Residue E46 participates in Mg(2+) binding. The active site involves D50. Residues D119 and E122 each coordinate Mg(2+). The active site involves E122. The 71-residue stretch at 160-230 (DGKTALQEAL…AKEALKWLEE (71 aa)) folds into the DRBM domain.

This sequence belongs to the ribonuclease III family. As to quaternary structure, homodimer. Mg(2+) serves as cofactor.

The protein localises to the cytoplasm. The catalysed reaction is Endonucleolytic cleavage to 5'-phosphomonoester.. Its function is as follows. Digests double-stranded RNA. Involved in the processing of primary rRNA transcript to yield the immediate precursors to the large and small rRNAs (23S and 16S). Processes some mRNAs, and tRNAs when they are encoded in the rRNA operon. Processes pre-crRNA and tracrRNA of type II CRISPR loci if present in the organism. This chain is Ribonuclease 3, found in Neisseria gonorrhoeae (strain ATCC 700825 / FA 1090).